The following is a 401-amino-acid chain: Nodal homolog 3-A (401 aa).

The first 18 residues, Met1–Ala18, serve as a signal peptide directing secretion. A propeptide spanning residues Met19 to Arg274 is cleaved from the precursor. N-linked (GlcNAc...) asparagine glycosylation is found at Asn168, Asn337, Asn341, and Asn344. Cystine bridges form between Cys299-Cys365 and Cys328-Cys396.

The protein belongs to the TGF-beta family. As to quaternary structure, monomer. The propeptide region interacts with bmp4 in a non-covalent manner. In terms of tissue distribution, expressed in the epithelial layer of the Spemann organizer during gastrulation.

Its subcellular location is the secreted. Its function is as follows. Exhibits mesoderm-dorsalizing activity and neural-inducing activity, but lacks mesoderm-inducing activity. Regulates the expression of specific mesodermal and neural genes. Induces convergent extension movements at the embryonic midline by activating the fgf signaling pathway to induce t/bra expression in the organizer region. Acts with wnt11 to induce Spemann organizer cells and induce axis formation. The unprocessed protein antagonizes bmp-signaling. The sequence is that of Nodal homolog 3-A (nodal3-a) from Xenopus laevis (African clawed frog).